We begin with the raw amino-acid sequence, 406 residues long: Type IV pilus assembly protein PilC (406 aa).

The next 4 helical transmembrane spans lie at isoleucine 69–leucine 91, tyrosine 171–valine 191, phenylalanine 211–valine 231, and methionine 377–phenylalanine 397.

Belongs to the GSP F family. As to quaternary structure, homotetramer. Interacts with PilB.

The protein localises to the cell inner membrane. Functionally, essential inner membrane component of the type IV pilus (T4P) that plays a role in surface and host cell adhesion, colonization, biofilm maturation, virulence, and twitching, a form of surface-associated motility facilitated by cycles of extension, adhesion, and retraction of T4P fibers. Controls both pilus assembly and disassembly and plays an important role in PilB localization to the complex and ATPase activity. The sequence is that of Type IV pilus assembly protein PilC from Thermus thermophilus (strain ATCC 27634 / DSM 579 / HB8).